The chain runs to 189 residues: Probable hydrogen peroxide-inducible genes activator (189 aa).

Residues Pro-8–Thr-65 enclose the HTH lysR-type domain. A DNA-binding region (H-T-H motif) is located at residues Phe-25–Ala-44.

It belongs to the LysR transcriptional regulatory family.

In terms of biological role, required for the induction the katG gene for catalase. Involved in the response to hydrogen peroxide. This chain is Probable hydrogen peroxide-inducible genes activator (oxyR), found in Mycobacterium xenopi.